Consider the following 184-residue polypeptide: Photosystem I assembly protein Ycf4 (184 aa).

The next 2 membrane-spanning stretches (helical) occupy residues 22-42 and 57-77; these read FCWA…GTSS and IIFF…LFIS.

It belongs to the Ycf4 family.

It is found in the plastid. It localises to the chloroplast thylakoid membrane. Its function is as follows. Seems to be required for the assembly of the photosystem I complex. The chain is Photosystem I assembly protein Ycf4 from Platanus occidentalis (Sycamore).